Reading from the N-terminus, the 128-residue chain is MSAKTDEILESLKSLSLLEASELVKQIEEAFGVSAAASAGVVMAAPGAAGGGEAAEEKTEFDVILESFEASAKIKVLKAVREATGLGLGDAKALVEAAPKLVKEGASKDDAEALKKAIEEVGGKVTIK.

Belongs to the bacterial ribosomal protein bL12 family. As to quaternary structure, homodimer. Part of the ribosomal stalk of the 50S ribosomal subunit. Forms a multimeric L10(L12)X complex, where L10 forms an elongated spine to which 2 to 4 L12 dimers bind in a sequential fashion. Binds GTP-bound translation factors.

Functionally, forms part of the ribosomal stalk which helps the ribosome interact with GTP-bound translation factors. Is thus essential for accurate translation. The polypeptide is Large ribosomal subunit protein bL12 (Synechococcus sp. (strain CC9902)).